We begin with the raw amino-acid sequence, 587 residues long: MGYDYALVHVKYTIPLAALLTVFSYPVFTRLDVVRTLFIVTIAFVATIPWDSYLIRTNVWTYPPDAVLGPTLYDIPAEELFFFIIQTYITAQLYIILNKPVLHAQYLNSPATLPQWIKSGKLVGQLALSGSVLLGTWLIAKKGEGTYLGLILVWACTFALFTWTITAHFLLALPLACTALPILLPTVYLWIVDEMALGRGTWAIESGTKLELQLFGSLEIEEATFFLVTNMLIVFGIAAFDKAVAVCDAFPEKFDKPADALAMSLLRARVFPSSKYDMQRILGIRQAAARLAKKSRSFHLASSVFPGRLRIDLTLLYSYCRLADDLVDDAATPEEAAVWISKLDRHLSLLYKDPDATSTPLASKYAAENFPPSALSALDMLPTSLLPREPLAELLKGFEMDLSFSNSAFPIADPEDLELYAARVASTVGQACLELVFCHCQHGLPDYMKAYLRNTARQMGLALQFVNISRDIAVDAKIGRVYLPTTWLKEEGLTPEDVLKSPNSEGVGKVRRRILAKALDHYGEARDSMKWIPSEARGPMIVAVESYMEIGRVLMRNGGSAAADGSGRATVPKSRRIWVAWSTLMAA.

The interval 1-242 is lycopene beta-cyclase; that stretch reads MGYDYALVHV…IVFGIAAFDK (242 aa). 7 consecutive transmembrane segments (helical) span residues 8 to 28, 35 to 55, 77 to 97, 120 to 140, 150 to 170, 172 to 192, and 220 to 240; these read VHVKYTIPLAALLTVFSYPVF, RTLFIVTIAFVATIPWDSYLI, AEELFFFIIQTYITAQLYIIL, GKLVGQLALSGSVLLGTWLIA, LILVWACTFALFTWTITAHFL, ALPLACTALPILLPTVYLWIV, and IEEATFFLVTNMLIVFGIAAF. The phytoene synthase stretch occupies residues 249-587; that stretch reads AFPEKFDKPA…WVAWSTLMAA (339 aa).

It in the N-terminal section; belongs to the lycopene beta-cyclase family. In the C-terminal section; belongs to the phytoene/squalene synthase family.

It localises to the membrane. It carries out the reaction all-trans-lycopene = gamma-carotene. The catalysed reaction is gamma-carotene = all-trans-beta-carotene. It catalyses the reaction 2 (2E,6E,10E)-geranylgeranyl diphosphate = 15-cis-phytoene + 2 diphosphate. It functions in the pathway carotenoid biosynthesis; beta-carotene biosynthesis. The protein operates within carotenoid biosynthesis; phytoene biosynthesis; all-trans-phytoene from geranylgeranyl diphosphate: step 1/1. Functionally, bifunctional enzyme that catalyzes the reactions from geranylgeranyl diphosphate to phytoene (phytoene synthase) and lycopene to beta-carotene via the intermediate gamma-carotene (lycopene cyclase). This is Bifunctional lycopene cyclase/phytoene synthase from Colletotrichum graminicola (strain M1.001 / M2 / FGSC 10212) (Maize anthracnose fungus).